The sequence spans 487 residues: b(0,+)-type amino acid transporter 1 (487 aa).

The segment at 1–22 is disordered; that stretch reads MGETVPRRRREDEKSIQSDEPK. Residues 1–31 lie on the Cytoplasmic side of the membrane; that stretch reads MGETVPRRRREDEKSIQSDEPKTTSLQKEVG. Serine 18 carries the post-translational modification Phosphoserine. Residues 32–55 traverse the membrane as a helical segment; sequence LISGICIIVGTIIGSGIFISPKSV. An L-arginine-binding site is contributed by 43–47; the sequence is IIGSG. The Extracellular portion of the chain corresponds to 56-62; it reads LSNTQAV. The chain crosses the membrane as a helical span at residues 63-84; it reads GPCLIIWAACGVLGTLGALCFA. The Cytoplasmic segment spans residues 85–110; sequence ELGTMITKSGGEYPYLMEAFGPIPAY. A helical transmembrane segment spans residues 111-137; it reads LFSWSSLLVMKPSSFAIICLSFSEYVA. The Extracellular segment spans residues 138–147; that stretch reads TPFYSGCEPP. A run of 2 helical transmembrane segments spans residues 148 to 169 and 170 to 193; these read KVVV…NSLS and VRLG…IIII. Residues 194–217 are Extracellular-facing; it reads SGLVLLAQGNTKNFENSFEGAEVS. A helical transmembrane segment spans residues 218 to 238; sequence VGAISLALYNGLWAYDGWNQL. Aspartate 233 serves as a coordination point for L-arginine. Topologically, residues 239–251 are cytoplasmic; that stretch reads NYITEELRNPFRN. A helical membrane pass occupies residues 252 to 274; sequence LPLAIIFGIPLVTVCYILINISY. Residues 275–302 are Extracellular-facing; sequence FTVMTPTELLQSQAVAVTFGDRVLYPAS. Residues 303-325 form a helical membrane-spanning segment; the sequence is WIVPVFVAFSTIGAANGTCFTAG. Residues 326–351 lie on the Cytoplasmic side of the membrane; it reads RLVYVAGREGHMLKVLSYISVRRLTP. The next 2 membrane-spanning stretches (helical) occupy residues 352-370 and 371-391; these read APAI…IPGD and INSL…LTIL. At 392–410 the chain is on the cytoplasmic side; that stretch reads GLIVMRFTRKELERPIKVP. The chain crosses the membrane as a helical span at residues 411–431; sequence IFIPILVTFIAAFLVLAPVIT. At 432 to 434 the chain is on the extracellular side; that stretch reads NPA. The helical transmembrane segment at 435–450 threads the bilayer; that stretch reads WEYLYCVLFILSGLVF. Residues 451–487 are Cytoplasmic-facing; the sequence is YFLFVYYKFEWAQKISKPITMHLQMLMEVVPPEPDPK.

It belongs to the amino acid-polyamine-organocation (APC) superfamily. Disulfide-linked heterodimer composed of the catalytic light chain subunit SLC7A9 and the heavy chain subunit. The heterodimer is the minimal functional unit. Assembles in heterotetramers (dimers of heterodimers) and higher order oligomers. Interacts with CAV1. Kidney and small intestine.

The protein resides in the apical cell membrane. The enzyme catalyses L-leucine(out) + L-arginine(in) = L-leucine(in) + L-arginine(out). It carries out the reaction L-histidine(out) + L-arginine(in) = L-histidine(in) + L-arginine(out). The catalysed reaction is L-arginine(in) + L-phenylalanine(out) = L-arginine(out) + L-phenylalanine(in). It catalyses the reaction L-cysteine(out) + L-arginine(in) = L-cysteine(in) + L-arginine(out). The enzyme catalyses L-cystine(out) + L-arginine(in) = L-cystine(in) + L-arginine(out). It carries out the reaction L-lysine(out) + L-arginine(in) = L-lysine(in) + L-arginine(out). Mediates the electrogenic exchange between cationic amino acids and neutral amino acids, with a stoichiometry of 1:1. Has system b(0,+)-like activity with high affinity for extracellular cationic amino acids and L-cystine and lower affinity for intracellular neutral amino acids. Substrate exchange is driven by high concentration of intracellular neutral amino acids and the intracellular reduction of L-cystine to L-cysteine. Required for reabsorption of L-cystine and dibasic amino acids across the brush border membrane in renal proximal tubules. This chain is b(0,+)-type amino acid transporter 1, found in Oryctolagus cuniculus (Rabbit).